Reading from the N-terminus, the 358-residue chain is 3-dehydroquinate synthase (358 aa).

NAD(+) contacts are provided by residues 70 to 75 (DGEQFK), 104 to 108 (GVIGD), 128 to 129 (TT), Lys-141, Lys-150, and 168 to 171 (CLHT). 3 residues coordinate Zn(2+): Glu-183, His-246, and His-263.

The protein belongs to the sugar phosphate cyclases superfamily. Dehydroquinate synthase family. It depends on Co(2+) as a cofactor. Requires Zn(2+) as cofactor. NAD(+) serves as cofactor.

Its subcellular location is the cytoplasm. It carries out the reaction 7-phospho-2-dehydro-3-deoxy-D-arabino-heptonate = 3-dehydroquinate + phosphate. The protein operates within metabolic intermediate biosynthesis; chorismate biosynthesis; chorismate from D-erythrose 4-phosphate and phosphoenolpyruvate: step 2/7. In terms of biological role, catalyzes the conversion of 3-deoxy-D-arabino-heptulosonate 7-phosphate (DAHP) to dehydroquinate (DHQ). The protein is 3-dehydroquinate synthase of Shewanella baltica (strain OS195).